The chain runs to 152 residues: 3-dehydroquinate dehydratase (152 aa).

The Proton acceptor role is filled by tyrosine 23. The substrate site is built by asparagine 75, histidine 81, and aspartate 88. Catalysis depends on histidine 101, which acts as the Proton donor. Residues 102–103 (IS) and arginine 112 each bind substrate.

This sequence belongs to the type-II 3-dehydroquinase family. In terms of assembly, homododecamer.

It carries out the reaction 3-dehydroquinate = 3-dehydroshikimate + H2O. It functions in the pathway metabolic intermediate biosynthesis; chorismate biosynthesis; chorismate from D-erythrose 4-phosphate and phosphoenolpyruvate: step 3/7. Functionally, catalyzes a trans-dehydration via an enolate intermediate. This is 3-dehydroquinate dehydratase from Alkalilimnicola ehrlichii (strain ATCC BAA-1101 / DSM 17681 / MLHE-1).